A 220-amino-acid chain; its full sequence is StAR-related lipid transfer protein 6 (220 aa).

In terms of domain architecture, START spans 1-208 (MDFKAIAQQT…AKDGIKAHRT (208 aa)).

In terms of biological role, may be involved in the intracellular transport of sterols or other lipids. May bind cholesterol or other sterols. The sequence is that of StAR-related lipid transfer protein 6 (STARD6) from Homo sapiens (Human).